Consider the following 165-residue polypeptide: Lipoprotein signal peptidase (165 aa).

A run of 3 helical transmembrane segments spans residues 9 to 29 (FLAI…VLLY), 69 to 89 (KYFL…FLFL), and 98 to 118 (IRFS…DIVF). Active-site residues include D124 and D142. The chain crosses the membrane as a helical span at residues 133-153 (WFFPTFNFADIFISLGTLIFI).

The protein belongs to the peptidase A8 family.

The protein localises to the cell inner membrane. It catalyses the reaction Release of signal peptides from bacterial membrane prolipoproteins. Hydrolyzes -Xaa-Yaa-Zaa-|-(S,diacylglyceryl)Cys-, in which Xaa is hydrophobic (preferably Leu), and Yaa (Ala or Ser) and Zaa (Gly or Ala) have small, neutral side chains.. It functions in the pathway protein modification; lipoprotein biosynthesis (signal peptide cleavage). Functionally, this protein specifically catalyzes the removal of signal peptides from prolipoproteins. In Chlamydia abortus (strain DSM 27085 / S26/3) (Chlamydophila abortus), this protein is Lipoprotein signal peptidase.